The sequence spans 578 residues: Proline--tRNA ligase (578 aa).

The protein belongs to the class-II aminoacyl-tRNA synthetase family. ProS type 1 subfamily. Homodimer.

It is found in the cytoplasm. It carries out the reaction tRNA(Pro) + L-proline + ATP = L-prolyl-tRNA(Pro) + AMP + diphosphate. In terms of biological role, catalyzes the attachment of proline to tRNA(Pro) in a two-step reaction: proline is first activated by ATP to form Pro-AMP and then transferred to the acceptor end of tRNA(Pro). As ProRS can inadvertently accommodate and process non-cognate amino acids such as alanine and cysteine, to avoid such errors it has two additional distinct editing activities against alanine. One activity is designated as 'pretransfer' editing and involves the tRNA(Pro)-independent hydrolysis of activated Ala-AMP. The other activity is designated 'posttransfer' editing and involves deacylation of mischarged Ala-tRNA(Pro). The misacylated Cys-tRNA(Pro) is not edited by ProRS. This Burkholderia ambifaria (strain ATCC BAA-244 / DSM 16087 / CCUG 44356 / LMG 19182 / AMMD) (Burkholderia cepacia (strain AMMD)) protein is Proline--tRNA ligase.